The following is a 323-amino-acid chain: Oligodendrocyte transcription factor 2 (323 aa).

Polar residues predominate over residues 1-13 (MDSDASLVSSRPS). Residues 1–107 (MDSDASLVSS…KKQMTEPELQ (107 aa)) are disordered. Low complexity predominate over residues 77 to 93 (SSSSSTSSSTSSAATSS). One can recognise a bHLH domain in the interval 108 to 162 (QLRLKINSRERKRMHDLNIAMDGLREVMPYAHGPSVRKLSKIATLLLARNYILML).

Interacts with NKX2-2. Interacts with ZNF488. In terms of tissue distribution, expressed specifically in the brain.

It localises to the nucleus. The protein localises to the cytoplasm. In terms of biological role, required for oligodendrocyte and motor neuron specification in the spinal cord, as well as for the development of somatic motor neurons in the hindbrain. Functions together with ZNF488 to promote oligodendrocyte differentiation. Cooperates with OLIG1 to establish the pMN domain of the embryonic neural tube. Antagonist of V2 interneuron and of NKX2-2-induced V3 interneuron development. In Mus musculus (Mouse), this protein is Oligodendrocyte transcription factor 2 (Olig2).